A 188-amino-acid polypeptide reads, in one-letter code: MASPAGNITFEDYLGLNAALFEWADSYDSKDWDRLRKCIAPELRIDYRSFLDKIWEAMPAEEFIAMISDKSVLGNPLLKTQHFIGGSRWEKVSDTEVIGHHQLRVPHQKYTDASRTEVAVKGHAHSYNMHWYRKVNGVWKFAGLNPEIRWSEYDFDAVFADGRDSYGTEDQKTDVKVVEKEIKFAAAH.

Tyr-27, Tyr-47, and Phe-50 together coordinate substrate. Active-site residues include His-82 and His-107. Asn-128 is a substrate binding site.

The protein belongs to the scytalone dehydratase family. Homotrimer. Each subunit contains an active site, located in the central part of the hydrophobic core of the monomer, which functions independently.

Its subcellular location is the endosome. The enzyme catalyses scytalone = 1,3,8-trihydroxynaphthalene + H2O. Its pathway is pigment biosynthesis; melanin biosynthesis. With respect to regulation, carpropamid acts as an efficient inhibitor of scytalone dehydratase activity. Scytalone dehydratase; part of the gene cluster that mediates the biosynthesis of dihydroxynaphthalene (DHN)-melanin, a bluish-green pigment and a structural component of the conidial wall. Within the pathway, catalyzes the dehydration of scytalone as well as of vermelone. The sequence is that of Scytalone dehydratase from Colletotrichum orbiculare (strain 104-T / ATCC 96160 / CBS 514.97 / LARS 414 / MAFF 240422) (Cucumber anthracnose fungus).